Here is a 516-residue protein sequence, read N- to C-terminus: GMP synthase [glutamine-hydrolyzing] (516 aa).

Residues 8–198 (KILILDFGSQ…VVNICGCDTL (191 aa)) enclose the Glutamine amidotransferase type-1 domain. The active-site Nucleophile is C84. Catalysis depends on residues H172 and E174. The region spanning 199–391 (WNIENIIEND…LGLPYNMLYR (193 aa)) is the GMPS ATP-PPase domain. ATP is bound at residue 226–232 (SGGVDSS).

In terms of assembly, homodimer.

It carries out the reaction XMP + L-glutamine + ATP + H2O = GMP + L-glutamate + AMP + diphosphate + 2 H(+). It functions in the pathway purine metabolism; GMP biosynthesis; GMP from XMP (L-Gln route): step 1/1. Functionally, catalyzes the synthesis of GMP from XMP. This Francisella tularensis subsp. tularensis (strain FSC 198) protein is GMP synthase [glutamine-hydrolyzing].